Consider the following 243-residue polypeptide: UPF0246 protein SpyM51747 (243 aa).

The protein belongs to the UPF0246 family.

In Streptococcus pyogenes serotype M5 (strain Manfredo), this protein is UPF0246 protein SpyM51747.